Here is an 843-residue protein sequence, read N- to C-terminus: Protein P (843 aa).

The terminal protein domain (TP) stretch occupies residues 1-177 (MPLSYQHFRK…FCGSPYSWEQ (177 aa)). Residues 178 to 346 (DLQHGRLVFQ…YCLYHIVNLI (169 aa)) are spacer. The segment at 219–250 (RKSRLGPQPAQGQLAGRQQGGSGSIRARVHPS) is disordered. Over residues 223 to 235 (LGPQPAQGQLAGR) the composition is skewed to low complexity. The segment at 347–690 (EDWGPCTEHG…YLNLYPVARQ (344 aa)) is polymerase/reverse transcriptase domain (RT). The Reverse transcriptase domain maps to 357–600 (EHRIRTPRTP…YSLNFMGYVI (244 aa)). Residues aspartate 429, aspartate 551, and aspartate 552 each contribute to the Mg(2+) site.

This sequence belongs to the hepadnaviridae P protein family.

It carries out the reaction DNA(n) + a 2'-deoxyribonucleoside 5'-triphosphate = DNA(n+1) + diphosphate. The enzyme catalyses Endonucleolytic cleavage to 5'-phosphomonoester.. With respect to regulation, activated by host HSP70 and HSP40 in vitro to be able to bind the epsilon loop of the pgRNA. Because deletion of the RNase H region renders the protein partly chaperone-independent, the chaperones may be needed indirectly to relieve occlusion of the RNA-binding site by this domain. Inhibited by several reverse-transcriptase inhibitors: Lamivudine, Adefovir and Entecavir. In terms of biological role, multifunctional enzyme that converts the viral RNA genome into dsDNA in viral cytoplasmic capsids. This enzyme displays a DNA polymerase activity that can copy either DNA or RNA templates, and a ribonuclease H (RNase H) activity that cleaves the RNA strand of RNA-DNA heteroduplexes in a partially processive 3'- to 5'-endonucleasic mode. Neo-synthesized pregenomic RNA (pgRNA) are encapsidated together with the P protein, and reverse-transcribed inside the nucleocapsid. Initiation of reverse-transcription occurs first by binding the epsilon loop on the pgRNA genome, and is initiated by protein priming, thereby the 5'-end of (-)DNA is covalently linked to P protein. Partial (+)DNA is synthesized from the (-)DNA template and generates the relaxed circular DNA (RC-DNA) genome. After budding and infection, the RC-DNA migrates in the nucleus, and is converted into a plasmid-like covalently closed circular DNA (cccDNA). The activity of P protein does not seem to be necessary for cccDNA generation, and is presumably released from (+)DNA by host nuclear DNA repair machinery. This Hepatitis B virus genotype B2 (isolate Vietnam/16091/1992) (HBV-B) protein is Protein P.